A 113-amino-acid chain; its full sequence is Pro-FMRFamide-related neuropeptide FF (113 aa).

The N-terminal stretch at 1 to 20 (MDSRQAAALLVLLLLIDGGC) is a signal peptide. The propeptide occupies 21–65 (AEGPGGQQEDQLSAEEDSEPLPPQDAQTSGSLLHYLLQAMERPGR). The interval 22–48 (EGPGGQQEDQLSAEEDSEPLPPQDAQT) is disordered. Phenylalanine 76 carries the phenylalanine amide modification. The propeptide occupies 79 to 92 (NTQGSWRNEWLSPR). Residue phenylalanine 110 is modified to Phenylalanine amide.

Belongs to the FARP (FMRFamide related peptide) family.

It localises to the secreted. Morphine modulating peptides. Have wide-ranging physiologic effects, including the modulation of morphine-induced analgesia, elevation of arterial blood pressure, and increased somatostatin secretion from the pancreas. Neuropeptide FF potentiates and sensitizes ASIC1 and ASIC3 channels. The polypeptide is Pro-FMRFamide-related neuropeptide FF (Homo sapiens (Human)).